A 702-amino-acid polypeptide reads, in one-letter code: Ribosomal RNA large subunit methyltransferase K/L (702 aa).

The 112-residue stretch at 43 to 154 folds into the THUMP domain; it reads LVYQSLMWSR…KETASIALDL (112 aa).

This sequence belongs to the methyltransferase superfamily. RlmKL family.

It localises to the cytoplasm. The catalysed reaction is guanosine(2445) in 23S rRNA + S-adenosyl-L-methionine = N(2)-methylguanosine(2445) in 23S rRNA + S-adenosyl-L-homocysteine + H(+). It carries out the reaction guanosine(2069) in 23S rRNA + S-adenosyl-L-methionine = N(2)-methylguanosine(2069) in 23S rRNA + S-adenosyl-L-homocysteine + H(+). Specifically methylates the guanine in position 2445 (m2G2445) and the guanine in position 2069 (m7G2069) of 23S rRNA. This chain is Ribosomal RNA large subunit methyltransferase K/L, found in Escherichia coli O1:K1 / APEC.